Here is a 343-residue protein sequence, read N- to C-terminus: Probable F-box protein At1g67455 (343 aa).

Positions 1 to 46 (MMISDLPEDMVEEILSRVSIISLGALRWNDLSKARVICKAEARQQF) constitute an F-box domain.

This chain is Probable F-box protein At1g67455, found in Arabidopsis thaliana (Mouse-ear cress).